The chain runs to 385 residues: DNA replication and repair protein RecF (385 aa).

Gly30–Thr37 lines the ATP pocket.

Belongs to the RecF family.

Its subcellular location is the cytoplasm. The RecF protein is involved in DNA metabolism; it is required for DNA replication and normal SOS inducibility. RecF binds preferentially to single-stranded, linear DNA. It also seems to bind ATP. This is DNA replication and repair protein RecF from Mycobacterium bovis (strain ATCC BAA-935 / AF2122/97).